Here is a 26-residue protein sequence, read N- to C-terminus: Ribulose bisphosphate carboxylase large chain (26 aa).

Positions 1–2 (MS) are excised as a propeptide. P3 is subject to N-acetylproline.

Belongs to the RuBisCO large chain family. Type I subfamily. Heterohexadecamer of 8 large chains and 8 small chains.

Its subcellular location is the plastid. The protein resides in the chloroplast. It carries out the reaction 2 (2R)-3-phosphoglycerate + 2 H(+) = D-ribulose 1,5-bisphosphate + CO2 + H2O. The enzyme catalyses D-ribulose 1,5-bisphosphate + O2 = 2-phosphoglycolate + (2R)-3-phosphoglycerate + 2 H(+). In terms of biological role, ruBisCO catalyzes two reactions: the carboxylation of D-ribulose 1,5-bisphosphate, the primary event in carbon dioxide fixation, as well as the oxidative fragmentation of the pentose substrate in the photorespiration process. Both reactions occur simultaneously and in competition at the same active site. In Vicia faba (Broad bean), this protein is Ribulose bisphosphate carboxylase large chain (rbcL).